Reading from the N-terminus, the 126-residue chain is SOSS complex subunit C homolog (126 aa).

The segment at 106–126 (LEPLPSPATTPTAPPSHSISK) is disordered. The span at 107–119 (EPLPSPATTPTAP) shows a compositional bias: pro residues.

It belongs to the SOSS-C family.

This is SOSS complex subunit C homolog from Drosophila sechellia (Fruit fly).